The primary structure comprises 289 residues: Glycine--tRNA ligase alpha subunit (289 aa).

This sequence belongs to the class-II aminoacyl-tRNA synthetase family. Tetramer of two alpha and two beta subunits.

The protein localises to the cytoplasm. The enzyme catalyses tRNA(Gly) + glycine + ATP = glycyl-tRNA(Gly) + AMP + diphosphate. In Rickettsia typhi (strain ATCC VR-144 / Wilmington), this protein is Glycine--tRNA ligase alpha subunit.